A 429-amino-acid chain; its full sequence is Bifunctional phosphoribosylaminoimidazole carboxylase/phosphoribosylaminoimidazole succinocarboxamide synthetase (429 aa).

Positions 7-264 are SAICAR synthetase; the sequence is ASIEGYKLGK…WVAEQLADIV (258 aa). The tract at residues 7 to 264 is SAICAR synthetase domain; it reads ASIEGYKLGK…WVAEQLADIV (258 aa). Positions 265-429 are AIR carboxylase; sequence PKKDHLVVIL…DKELRGVRNA (165 aa). The interval 270–429 is AIR carboxylase domain; the sequence is LVVILMGSAS…DKELRGVRNA (160 aa). Ser-335 contacts CO2.

In the N-terminal section; belongs to the SAICAR synthetase family. This sequence in the C-terminal section; belongs to the AIR carboxylase family. Class II subfamily. In terms of assembly, homooctamer.

The enzyme catalyses 5-amino-1-(5-phospho-D-ribosyl)imidazole-4-carboxylate + L-aspartate + ATP = (2S)-2-[5-amino-1-(5-phospho-beta-D-ribosyl)imidazole-4-carboxamido]succinate + ADP + phosphate + 2 H(+). It carries out the reaction 5-amino-1-(5-phospho-D-ribosyl)imidazole-4-carboxylate + H(+) = 5-amino-1-(5-phospho-beta-D-ribosyl)imidazole + CO2. It participates in purine metabolism; IMP biosynthesis via de novo pathway; 5-amino-1-(5-phospho-D-ribosyl)imidazole-4-carboxamide from 5-amino-1-(5-phospho-D-ribosyl)imidazole-4-carboxylate: step 1/2. Its pathway is purine metabolism; IMP biosynthesis via de novo pathway; 5-amino-1-(5-phospho-D-ribosyl)imidazole-4-carboxylate from 5-amino-1-(5-phospho-D-ribosyl)imidazole (carboxylase route): step 1/1. Its function is as follows. Bifunctional phosphoribosylaminoimidazole carboxylase and phosphoribosylaminoimidazole succinocarboxamide synthetase catalyzing two reactions of the de novo purine biosynthetic pathway. The chain is Bifunctional phosphoribosylaminoimidazole carboxylase/phosphoribosylaminoimidazole succinocarboxamide synthetase from Drosophila melanogaster (Fruit fly).